An 88-amino-acid polypeptide reads, in one-letter code: Small ribosomal subunit protein uS15 (88 aa).

Belongs to the universal ribosomal protein uS15 family. In terms of assembly, part of the 30S ribosomal subunit. Forms a bridge to the 50S subunit in the 70S ribosome, contacting the 23S rRNA.

Functionally, one of the primary rRNA binding proteins, it binds directly to 16S rRNA where it helps nucleate assembly of the platform of the 30S subunit by binding and bridging several RNA helices of the 16S rRNA. Forms an intersubunit bridge (bridge B4) with the 23S rRNA of the 50S subunit in the ribosome. This is Small ribosomal subunit protein uS15 from Flavobacterium psychrophilum (strain ATCC 49511 / DSM 21280 / CIP 103535 / JIP02/86).